A 306-amino-acid chain; its full sequence is Protein SULFUR DEFICIENCY-INDUCED 1 (306 aa).

5 TPR repeats span residues 1-22, 71-104, 107-140, 167-200, and 202-233; these read MERSLKKTKNNYNNSIKSNLMK, DSALKDMAVVMKQLDRSEEAIEAIKSFRPRCSKN, DSLDNVLIDLYKKCGRMEEQVELLKRKLRQIYQG, SRLLGNLGWAYMQQAKYLSAEAVYRKAQMVEPDA, and KSCNLAMCLIKQGRFEEGRLVLDDVLEYRVLG. Positions 72–139 form a coiled coil; that stretch reads SALKDMAVVM…LKRKLRQIYQ (68 aa). Residues 238 to 260 are a coiled coil; sequence RTRQRAEELLSELESSLPRMRDA. The stretch at 270–304 is one TPR 6 repeat; that stretch reads LDDDFVLGLEEMTSTSFKSKRLPIFEQISSFRNTL.

This sequence belongs to the MS5 protein family.

The protein resides in the nucleus. Functionally, involved in the utilization of stored sulfate under sulfur-deficient conditions. This is Protein SULFUR DEFICIENCY-INDUCED 1 from Arabidopsis thaliana (Mouse-ear cress).